The following is a 590-amino-acid chain: Aspartate--tRNA(Asp/Asn) ligase (590 aa).

Glutamate 175 is a binding site for L-aspartate. The tract at residues 199–202 (QQYK) is aspartate. Residues arginine 221 and histidine 450 each contribute to the L-aspartate site. 221–223 (RDE) is an ATP binding site. Glutamate 484 contacts ATP. Arginine 491 is a binding site for L-aspartate. 536–539 (GVDR) is an ATP binding site.

This sequence belongs to the class-II aminoacyl-tRNA synthetase family. Type 1 subfamily. Homodimer.

It localises to the cytoplasm. The catalysed reaction is tRNA(Asx) + L-aspartate + ATP = L-aspartyl-tRNA(Asx) + AMP + diphosphate. Functionally, aspartyl-tRNA synthetase with relaxed tRNA specificity since it is able to aspartylate not only its cognate tRNA(Asp) but also tRNA(Asn). Reaction proceeds in two steps: L-aspartate is first activated by ATP to form Asp-AMP and then transferred to the acceptor end of tRNA(Asp/Asn). The chain is Aspartate--tRNA(Asp/Asn) ligase from Bradyrhizobium sp. (strain ORS 278).